Reading from the N-terminus, the 183-residue chain is A-type ATP synthase subunit E (183 aa).

Belongs to the V-ATPase E subunit family. Has multiple subunits with at least A(3), B(3), C, D, E, F, H, I and proteolipid K(x).

The protein resides in the cell membrane. In terms of biological role, component of the A-type ATP synthase that produces ATP from ADP in the presence of a proton gradient across the membrane. This chain is A-type ATP synthase subunit E, found in Methanococcoides burtonii (strain DSM 6242 / NBRC 107633 / OCM 468 / ACE-M).